The primary structure comprises 245 residues: OVARIAN TUMOR DOMAIN-containing deubiquitinating enzyme 11 (245 aa).

The tract at residues 1–37 is disordered; the sequence is MDENHRNPFANASTSARASGSTSASSNSSFSSSVADT. Low complexity predominate over residues 10–35; the sequence is ANASTSARASGSTSASSNSSFSSSVA. The OTU domain occupies 101 to 225; that stretch reads LAELQMEGDG…EVHYNSLYAN (125 aa). The active site involves D109. C112 serves as the catalytic Nucleophile. Residue H218 is part of the active site.

Belongs to the peptidase C85 family.

It catalyses the reaction Thiol-dependent hydrolysis of ester, thioester, amide, peptide and isopeptide bonds formed by the C-terminal Gly of ubiquitin (a 76-residue protein attached to proteins as an intracellular targeting signal).. Its function is as follows. Hydrolase that can remove conjugated ubiquitin from proteins in vitro and may therefore play an important regulatory role at the level of protein turnover by preventing degradation. Inactive cysteine protease. The chain is OVARIAN TUMOR DOMAIN-containing deubiquitinating enzyme 11 from Arabidopsis thaliana (Mouse-ear cress).